Reading from the N-terminus, the 249-residue chain is Fatty acid elongase 5 (249 aa).

The next 3 helical transmembrane spans lie at 23–43, 68–88, and 100–120; these read VFVNYPVLIGCHIGYLVVIVL, VALSLVMAINLGQFLVYGVFN, and WIFVHYATKFLDMFDTYFIVL. The short motif at 131–135 is the HxxHH motif element; sequence HIYHH. His-134 acts as the Nucleophile in catalysis. 4 helical membrane passes run 138 to 158, 159 to 179, 193 to 213, and 217 to 236; these read IGFIWGLLLHHGVANGTAFFG, AWINSAVHALMYFHYLYTSLG, MIQFALCILHAVLAVVAHSPI, and WAVLQLCYHLTLLYLFMRFY.

The protein belongs to the ELO family.

It localises to the membrane. It carries out the reaction an acyl-CoA + malonyl-CoA + H(+) = a 3-oxoacyl-CoA + CO2 + CoA. It functions in the pathway lipid metabolism; polyunsaturated fatty acid biosynthesis. Involved in the synthesis of fatty acids. Elongates C20 polyunsaturated fatty acids (PUFAs) with a preference for n-6 PUFAs. The chain is Fatty acid elongase 5 from Leishmania major.